A 206-amino-acid polypeptide reads, in one-letter code: MANLFKNILDSLKLTDDEDLDDYDDYVSELEEKERRKTERQEQRQAVKQEKRTFPSQRPAFSEEAPTSSSSKLSAASGSSDFADLRKERSQRMEKTNVSKVVPIRNPQKGLEVCIMKPTSFEDSQDICDMLLSGRAAVINLEGFDVDLAQRVMDFISGAVYSLNGKLHQISSYIFIISPDSVDISGDYLDLIRQNGFEVPTLNKDF.

Positions 31–53 (EEKERRKTERQEQRQAVKQEKRT) are enriched in basic and acidic residues. The interval 31–81 (EEKERRKTERQEQRQAVKQEKRTFPSQRPAFSEEAPTSSSSKLSAASGSSD) is disordered. Over residues 60 to 80 (AFSEEAPTSSSSKLSAASGSS) the composition is skewed to low complexity.

The protein belongs to the SepF family. As to quaternary structure, homodimer. Interacts with FtsZ.

The protein localises to the cytoplasm. Functionally, cell division protein that is part of the divisome complex and is recruited early to the Z-ring. Probably stimulates Z-ring formation, perhaps through the cross-linking of FtsZ protofilaments. Its function overlaps with FtsA. This chain is Cell division protein SepF, found in Lachnoclostridium phytofermentans (strain ATCC 700394 / DSM 18823 / ISDg) (Clostridium phytofermentans).